The primary structure comprises 324 residues: Geranylgeranyl diphosphate synthase (324 aa).

3 residues coordinate isopentenyl diphosphate: K46, R49, and H78. Mg(2+) is bound by residues D85 and D89. R94 is an an all-trans-polyprenyl diphosphate binding site. An isopentenyl diphosphate-binding site is contributed by R95. An all-trans-polyprenyl diphosphate contacts are provided by K176, T177, Q214, K231, and K241.

It belongs to the FPP/GGPP synthase family. The cofactor is Mg(2+).

The enzyme catalyses isopentenyl diphosphate + (2E,6E)-farnesyl diphosphate = (2E,6E,10E)-geranylgeranyl diphosphate + diphosphate. It participates in isoprenoid biosynthesis; geranylgeranyl diphosphate biosynthesis; geranylgeranyl diphosphate from farnesyl diphosphate and isopentenyl diphosphate: step 1/1. Its function is as follows. Catalyzes the sequential condensation of isopentenyl pyrophosphate with the allylic pyrophosphates to yield geranylgeranyl diphosphate (GGPP) which is a precursor of the ether-linked lipids. This Methanosarcina mazei (strain ATCC BAA-159 / DSM 3647 / Goe1 / Go1 / JCM 11833 / OCM 88) (Methanosarcina frisia) protein is Geranylgeranyl diphosphate synthase.